Reading from the N-terminus, the 157-residue chain is Protein-export protein SecB (157 aa).

Belongs to the SecB family. Homotetramer, a dimer of dimers. One homotetramer interacts with 1 SecA dimer.

The protein resides in the cytoplasm. Functionally, one of the proteins required for the normal export of preproteins out of the cell cytoplasm. It is a molecular chaperone that binds to a subset of precursor proteins, maintaining them in a translocation-competent state. It also specifically binds to its receptor SecA. The protein is Protein-export protein SecB of Dichelobacter nodosus (strain VCS1703A).